Consider the following 1101-residue polypeptide: MTATRLVRAHPESSHRWVPAAAGWIVGVIATLSLLASVSPLVRSIIRVPREFVDDYIFNFPDTSFAWAFVLALLAAALAARKRIAWWILTGYMVAAAVWNVTGLLDGDRWFEDVGEIIGLGFHLAAIASLLLARREFWARVRPGALVKAAVTLVAGLGVGTLIGWGLLELFPGTLARPDRFWYALNRVGAFAGADAGAFSGHPHVLVNALLGLFGAMALMIAAVVLFQSQRADNALTGEDESAIRGLLELYGKNDSLGYFATRRDKAVVFAPNGRAAITYRVEVGVCLASGDPVGDPKAWPQAIEAWLTLCETYGWAPGVMGASATGAQAFRQAGLHALQLGDEAILHPDDFRLSGPEMRAVRQAVTRARRAGVAVRFRRHRELSPDEMAEVIAHADAWRDTEDERGFSMALGRLGDPADADCLLVEAVQNGTQVVAMLSLVPWGSNGVSLDLMRRAPQSPNGTIELMVSELCLQSESIGISRISLNFAMFRSAFEQGAQLGAGPVARLWRWLLVFFSRWWQLETLYRSNMKYQPEWVPRYACYEDARLVPRVGVASVIAEGFLVLPFSRRHDQPHTGHHIAAPGDLIATGRLHSDGTAPDRIGPVGDGADDDAAPRLPEQVRVRMAKLSALQDRGVDAYPVGSPPSHTIAEAIAAEEGTEVTVSGRVLRARDYGGVLFGQLRDWSAETQVALDNSALLDGTTTDFTRTVDLGDLIEVTGTMGHTRSGSWSVLVTRWRLIGKCLRPLPDKWKGLTDQEARVRARYVDLAVNTDARELIKARSAILHAIRETLVGKGFLEVETPILQQIHGGANARPFLTHINAYDLDLYLRIAPELYLKRLCVGGVERVFELGRAFRNEGVDFSHNPEFTLLEAYQAHADYTVWIDGCRELIQNAAMAANGSHVFFRPREDGVLEPVDISGRWAVKTVHGAVSEALGEHIDVDTDLATLRRLCDKAGIPYLTHWDAGAVVLEMYEHLVEDQTTEPTFYKDFPTSVSPLTRPHRSIPGVAERWDLVAWGVELGTAYSELTDPVEQRRRLQEQSLLAAGGDPEAMELDEDFLQAMEYAMPPTGGLGMGVDRVVMLITGRSIRETLPFPLAKPR.

The phosphatidylglycerol lysyltransferase stretch occupies residues 1-601 (MTATRLVRAH…RLHSDGTAPD (601 aa)). 7 helical membrane passes run 18–38 (VPAA…LASV), 60–80 (FPDT…ALAA), 84–104 (IAWW…VTGL), 113–133 (DVGE…LLLA), 151–171 (VTLV…LELF), 183–200 (YALN…GAFS), and 207–227 (VNAL…VVLF). The tract at residues 602-1101 (RIGPVGDGAD…TLPFPLAKPR (500 aa)) is lysine--tRNA ligase. Residues 662-740 (VTVSGRVLRA…SVLVTRWRLI (79 aa)) constitute a DNA-binding region (OB). 2 residues coordinate Mg(2+): Asp-1013 and Glu-1020.

In the N-terminal section; belongs to the LPG synthetase family. The protein in the C-terminal section; belongs to the class-II aminoacyl-tRNA synthetase family. The cofactor is Mg(2+).

It localises to the cell membrane. It catalyses the reaction tRNA(Lys) + L-lysine + ATP = L-lysyl-tRNA(Lys) + AMP + diphosphate. It carries out the reaction L-lysyl-tRNA(Lys) + a 1,2-diacyl-sn-glycero-3-phospho-(1'-sn-glycerol) = a 1,2-diacyl-sn-glycero-3-phospho-1'-(3'-O-L-lysyl)-sn-glycerol + tRNA(Lys). Functionally, catalyzes the production of L-lysyl-tRNA(Lys)transfer and the transfer of a lysyl group from L-lysyl-tRNA(Lys) to membrane-bound phosphatidylglycerol (PG), which produces lysylphosphatidylglycerol (LPG), one of the components of the bacterial membrane with a positive net charge. LPG synthesis contributes to the resistance to cationic antimicrobial peptides (CAMPs) and likely protects M.tuberculosis against the CAMPs produced by competiting microorganisms (bacteriocins). In fact, the modification of anionic phosphatidylglycerol with positively charged L-lysine results in repulsion of the peptides. The sequence is that of Lysylphosphatidylglycerol biosynthesis bifunctional protein LysX (lysX) from Mycolicibacterium gilvum (strain PYR-GCK) (Mycobacterium gilvum (strain PYR-GCK)).